The primary structure comprises 186 residues: ATP synthase subunit delta (186 aa).

It belongs to the ATPase delta chain family. In terms of assembly, F-type ATPases have 2 components, F(1) - the catalytic core - and F(0) - the membrane proton channel. F(1) has five subunits: alpha(3), beta(3), gamma(1), delta(1), epsilon(1). F(0) has three main subunits: a(1), b(2) and c(10-14). The alpha and beta chains form an alternating ring which encloses part of the gamma chain. F(1) is attached to F(0) by a central stalk formed by the gamma and epsilon chains, while a peripheral stalk is formed by the delta and b chains.

Its subcellular location is the cell inner membrane. In terms of biological role, f(1)F(0) ATP synthase produces ATP from ADP in the presence of a proton or sodium gradient. F-type ATPases consist of two structural domains, F(1) containing the extramembraneous catalytic core and F(0) containing the membrane proton channel, linked together by a central stalk and a peripheral stalk. During catalysis, ATP synthesis in the catalytic domain of F(1) is coupled via a rotary mechanism of the central stalk subunits to proton translocation. This protein is part of the stalk that links CF(0) to CF(1). It either transmits conformational changes from CF(0) to CF(1) or is implicated in proton conduction. In Chelativorans sp. (strain BNC1), this protein is ATP synthase subunit delta.